Consider the following 201-residue polypeptide: Large ribosomal subunit protein bL25 (201 aa).

Residues 179-201 (VSITAPRVEAEKTEEEEPESTEE) are disordered. The segment covering 190–201 (KTEEEEPESTEE) has biased composition (acidic residues).

Belongs to the bacterial ribosomal protein bL25 family. CTC subfamily. In terms of assembly, part of the 50S ribosomal subunit; part of the 5S rRNA/L5/L18/L25 subcomplex. Contacts the 5S rRNA. Binds to the 5S rRNA independently of L5 and L18.

Its function is as follows. This is one of the proteins that binds to the 5S RNA in the ribosome where it forms part of the central protuberance. The polypeptide is Large ribosomal subunit protein bL25 (Prosthecochloris aestuarii (strain DSM 271 / SK 413)).